A 492-amino-acid polypeptide reads, in one-letter code: Dipeptide permease D (492 aa).

The next 13 helical transmembrane spans lie at 14 to 34 (VVAL…LLIL), 49 to 69 (ALFS…GYLA), 91 to 111 (LVLG…AIIV), 138 to 158 (GGFS…PIAC), 167 to 187 (WAMG…IFLC), 212 to 232 (NWGW…VLFW), 236 to 256 (SVYA…RIYL), 269 to 289 (LIVV…QGGS), 312 to 332 (MFQS…AWLV), 344 to 364 (IWGK…ILTL), 379 to 399 (LMVL…PVAM), 413 to 433 (VLTG…AGVI), and 458 to 478 (VFSQ…VIWL).

This sequence belongs to the major facilitator superfamily. Proton-dependent oligopeptide transporter (POT/PTR) (TC 2.A.17) family. DtpD subfamily.

It localises to the cell inner membrane. In terms of biological role, probable proton-dependent permease that transports dipeptides. This is Dipeptide permease D from Klebsiella pneumoniae (strain 342).